We begin with the raw amino-acid sequence, 288 residues long: Store-operated calcium entry regulator STIMATE (288 aa).

Residues 1–28 are Cytoplasmic-facing; that stretch reads MQGPGGNVSRGLPGGPASTVASGAGRCE. 3 helical membrane passes run 29-49, 69-89, and 102-122; these read SGAL…VVAF, IWFL…FANV, and LYLI…YVGV. A GXXXG motif motif is present at residues 149–153; the sequence is GAWVG. The next 2 helical transmembrane spans lie at 156 to 176 and 194 to 214; these read ALYI…LLIL and LAIV…WVVD. At 215–288 the chain is on the cytoplasmic side; that stretch reads NFLMRKGKTK…KKKHRFGLPV (74 aa). Positions 228–288 are disordered; that stretch reads EERGANQDSR…KKKHRFGLPV (61 aa). Positions 241-246 are required for localization in the endoplasmic reticulum; it reads KVRYRR. The span at 261–272 shows a compositional bias: acidic residues; the sequence is ADDEMEESDAEE. The span at 277-288 shows a compositional bias: basic residues; sequence PVKKKHRFGLPV.

The protein belongs to the STIMATE family. Homooligomer. Interacts with STIM1.

It localises to the endoplasmic reticulum membrane. Acts as a regulator of store-operated Ca(2+) entry (SOCE) at junctional sites that connect the endoplasmic reticulum (ER) and plasma membrane (PM), called ER-plasma membrane (ER-PM) junction or cortical ER. SOCE is a Ca(2+) influx following depletion of intracellular Ca(2+) stores. Acts by interacting with STIM1, promoting STIM1 conformational switch. Involved in STIM1 relocalization to ER-PM junctions. Contributes to the maintenance and reorganization of store-dependent ER-PM junctions. In Rattus norvegicus (Rat), this protein is Store-operated calcium entry regulator STIMATE.